The sequence spans 885 residues: Probable alpha-glucosidase Os06g0675700 (885 aa).

The first 33 residues, 1-33 (MMGSPPAPPARRLGALAVFLLALFLAAPWGVDC), serve as a signal peptide directing secretion. N-linked (GlcNAc...) asparagine glycans are attached at residues Asn-195, Asn-378, and Asn-397. Active-site residues include Asp-443 and Glu-446. Residues Asn-467 and Asn-477 are each glycosylated (N-linked (GlcNAc...) asparagine). Catalysis depends on Asp-540, which acts as the Proton donor. 2 N-linked (GlcNAc...) asparagine glycosylation sites follow: Asn-576 and Asn-844.

It belongs to the glycosyl hydrolase 31 family.

The catalysed reaction is Hydrolysis of terminal, non-reducing (1-&gt;4)-linked alpha-D-glucose residues with release of alpha-D-glucose.. This is Probable alpha-glucosidase Os06g0675700 from Oryza sativa subsp. japonica (Rice).